Reading from the N-terminus, the 420-residue chain is Glutamyl-tRNA reductase (420 aa).

Substrate-binding positions include threonine 49–arginine 52, serine 107, glutamate 112–glutamine 114, and glutamine 118. The Nucleophile role is filled by cysteine 50. Glycine 187 to isoleucine 192 contributes to the NADP(+) binding site.

It belongs to the glutamyl-tRNA reductase family. Homodimer.

It carries out the reaction (S)-4-amino-5-oxopentanoate + tRNA(Glu) + NADP(+) = L-glutamyl-tRNA(Glu) + NADPH + H(+). It functions in the pathway porphyrin-containing compound metabolism; protoporphyrin-IX biosynthesis; 5-aminolevulinate from L-glutamyl-tRNA(Glu): step 1/2. In terms of biological role, catalyzes the NADPH-dependent reduction of glutamyl-tRNA(Glu) to glutamate 1-semialdehyde (GSA). The protein is Glutamyl-tRNA reductase of Photobacterium profundum (strain SS9).